Reading from the N-terminus, the 295-residue chain is UDP-3-O-acyl-N-acetylglucosamine deacetylase (295 aa).

3 residues coordinate Zn(2+): His-75, His-232, and Asp-236. His-259 functions as the Proton donor in the catalytic mechanism.

It belongs to the LpxC family. It depends on Zn(2+) as a cofactor.

It catalyses the reaction a UDP-3-O-[(3R)-3-hydroxyacyl]-N-acetyl-alpha-D-glucosamine + H2O = a UDP-3-O-[(3R)-3-hydroxyacyl]-alpha-D-glucosamine + acetate. It participates in glycolipid biosynthesis; lipid IV(A) biosynthesis; lipid IV(A) from (3R)-3-hydroxytetradecanoyl-[acyl-carrier-protein] and UDP-N-acetyl-alpha-D-glucosamine: step 2/6. Catalyzes the hydrolysis of UDP-3-O-myristoyl-N-acetylglucosamine to form UDP-3-O-myristoylglucosamine and acetate, the committed step in lipid A biosynthesis. In Helicobacter pylori (strain ATCC 700392 / 26695) (Campylobacter pylori), this protein is UDP-3-O-acyl-N-acetylglucosamine deacetylase.